The primary structure comprises 437 residues: Dolichyl-diphosphooligosaccharide--protein glycosyltransferase 48 kDa subunit (437 aa).

The signal sequence occupies residues 1–24; that stretch reads MASLRVSVLLVAASCLLLGSGLRA. The Lumenal segment spans residues 25–407; the sequence is GPRTLVLLEN…QYERFIPSAY (383 aa). Residues 408–428 traverse the membrane as a helical segment; that stretch reads PYYASAFSVMFGLFIFSIVFL. The Cytoplasmic portion of the chain corresponds to 429–437; the sequence is HMKEKEKSD.

This sequence belongs to the DDOST 48 kDa subunit family. Component of the oligosaccharyltransferase (OST) complex.

The protein resides in the endoplasmic reticulum membrane. It participates in protein modification; protein glycosylation. Functionally, subunit of the oligosaccharyl transferase (OST) complex that catalyzes the initial transfer of a defined glycan (Glc(3)Man(9)GlcNAc(2) in eukaryotes) from the lipid carrier dolichol-pyrophosphate to an asparagine residue within an Asn-X-Ser/Thr consensus motif in nascent polypeptide chains, the first step in protein N-glycosylation. N-glycosylation occurs cotranslationally and the complex associates with the Sec61 complex at the channel-forming translocon complex that mediates protein translocation across the endoplasmic reticulum (ER). All subunits are required for a maximal enzyme activity. Required for the assembly of both SST3A- and SS3B-containing OST complexes. This chain is Dolichyl-diphosphooligosaccharide--protein glycosyltransferase 48 kDa subunit, found in Xenopus tropicalis (Western clawed frog).